The following is a 95-amino-acid chain: FXYD domain-containing ion transport regulator 6 (95 aa).

The signal sequence occupies residues 1 to 18; that stretch reads MELVLVFLCSLLAPTVLA. Topologically, residues 19-35 are extracellular; sequence SAAEKEKEMDPFHYDYQ. A helical transmembrane segment spans residues 36–58; sequence TLRIGGLVFAVVLFSVGILLILS. Residues 59–95 are Cytoplasmic-facing; sequence RRCKCSFNQKPRAPGDEEAQVENLITANATEPQKAEN.

This sequence belongs to the FXYD family. As to quaternary structure, regulatory subunit of the sodium/potassium-transporting ATPase which is composed of a catalytic alpha subunit, a non-catalytic beta subunit and an additional regulatory subunit. The regulatory subunit, a member of the FXYD protein family, modulates the enzymatic activity in a tissue- and isoform-specific way by changing affinities of the Na+/K+-ATPase toward Na(+), K(+) or ATP.

It is found in the cell membrane. Associates with and regulates the activity of the sodium/potassium-transporting ATPase (NKA) which catalyzes the hydrolysis of ATP coupled with the exchange of Na(+) and K(+) ions across the plasma membrane. Reduces the apparent affinity for intracellular Na(+) with no change in the apparent affinity for extracellular K(+). In addition to modulating NKA kinetics, may also function as a regulator of NKA localization to the plasma membrane. The polypeptide is FXYD domain-containing ion transport regulator 6 (FXYD6) (Pongo abelii (Sumatran orangutan)).